A 209-amino-acid chain; its full sequence is Large ribosomal subunit protein uL4 (209 aa).

The interval 46-71 (GTSSTKTRSEVRGSSKKPWKQKGTGR) is disordered. The segment covering 59–71 (SSKKPWKQKGTGR) has biased composition (basic residues).

This sequence belongs to the universal ribosomal protein uL4 family. Part of the 50S ribosomal subunit.

Functionally, one of the primary rRNA binding proteins, this protein initially binds near the 5'-end of the 23S rRNA. It is important during the early stages of 50S assembly. It makes multiple contacts with different domains of the 23S rRNA in the assembled 50S subunit and ribosome. Its function is as follows. Forms part of the polypeptide exit tunnel. This Borreliella afzelii (strain PKo) (Borrelia afzelii) protein is Large ribosomal subunit protein uL4.